The following is a 536-amino-acid chain: CTP synthase (536 aa).

The amidoligase domain stretch occupies residues 1-267 (MSKFVFVTGG…CKETLNYLEL (267 aa)). CTP is bound at residue Ser-13. Ser-13 contacts UTP. Residues 14–19 (SIGKGI) and Asp-71 contribute to the ATP site. Residues Asp-71 and Glu-141 each contribute to the Mg(2+) site. Residues 148–150 (DIE), 188–193 (KTKPTQ), and Lys-224 each bind CTP. Residues 188–193 (KTKPTQ) and Lys-224 contribute to the UTP site. The Glutamine amidotransferase type-1 domain occupies 292 to 534 (KVALVGKYIE…IKASQDKLTQ (243 aa)). Gly-354 is a binding site for L-glutamine. Cys-381 acts as the Nucleophile; for glutamine hydrolysis in catalysis. L-glutamine-binding positions include 382 to 385 (LGMQ), Glu-405, and Arg-462. Catalysis depends on residues His-507 and Glu-509.

This sequence belongs to the CTP synthase family. As to quaternary structure, homotetramer.

The enzyme catalyses UTP + L-glutamine + ATP + H2O = CTP + L-glutamate + ADP + phosphate + 2 H(+). The catalysed reaction is L-glutamine + H2O = L-glutamate + NH4(+). It catalyses the reaction UTP + NH4(+) + ATP = CTP + ADP + phosphate + 2 H(+). The protein operates within pyrimidine metabolism; CTP biosynthesis via de novo pathway; CTP from UDP: step 2/2. With respect to regulation, allosterically activated by GTP, when glutamine is the substrate; GTP has no effect on the reaction when ammonia is the substrate. The allosteric effector GTP functions by stabilizing the protein conformation that binds the tetrahedral intermediate(s) formed during glutamine hydrolysis. Inhibited by the product CTP, via allosteric rather than competitive inhibition. Its function is as follows. Catalyzes the ATP-dependent amination of UTP to CTP with either L-glutamine or ammonia as the source of nitrogen. Regulates intracellular CTP levels through interactions with the four ribonucleotide triphosphates. The protein is CTP synthase of Prochlorococcus marinus (strain MIT 9301).